The following is a 185-amino-acid chain: Adenylate kinase (185 aa).

8-16 (GIPGSGSTT) contributes to the ATP binding site.

Belongs to the archaeal adenylate kinase family.

It localises to the cytoplasm. It catalyses the reaction AMP + ATP = 2 ADP. The polypeptide is Adenylate kinase (adkA) (Methanothermobacter thermautotrophicus (strain ATCC 29096 / DSM 1053 / JCM 10044 / NBRC 100330 / Delta H) (Methanobacterium thermoautotrophicum)).